A 553-amino-acid chain; its full sequence is Formate--tetrahydrofolate ligase (553 aa).

62–69 lines the ATP pocket; that stretch reads TPAGEGKS.

This sequence belongs to the formate--tetrahydrofolate ligase family.

The enzyme catalyses (6S)-5,6,7,8-tetrahydrofolate + formate + ATP = (6R)-10-formyltetrahydrofolate + ADP + phosphate. The protein operates within one-carbon metabolism; tetrahydrofolate interconversion. The polypeptide is Formate--tetrahydrofolate ligase (Limosilactobacillus reuteri subsp. reuteri (strain JCM 1112) (Lactobacillus reuteri)).